A 261-amino-acid chain; its full sequence is Acidic leucine-rich nuclear phosphoprotein 32 family member B (261 aa).

LRR repeat units lie at residues 16–40 (PAAV…LTAE), 43–64 (NLEF…PKLP), 65–87 (KLKK…AEKL), and 89–110 (NLTH…EPLK). Lys86 carries the post-translational modification N6-acetyllysine. Residues 123-161 (CEVTNLNDYRESVFKLLPQLTYLDGYDREDREAPDSDAE) form the LRRCT domain. Residues 149–261 (DREDREAPDS…RETDDEGEDD (113 aa)) form a disordered region. The segment covering 157-243 (DSDAEVDGVD…DEDEDEEEEE (87 aa)) has biased composition (acidic residues). Ser158 bears the Phosphoserine mark. A compositionally biased stretch (basic and acidic residues) spans 244-254 (SGKGEKRKRET). Residues 249 to 252 (KRKR) carry the Nuclear localization signal motif. Thr254 is subject to Phosphothreonine.

Belongs to the ANP32 family. Interacts with histones H3 and H4. Interacts with KLF5; this interaction induces promoter region-specific histone incorporation and inhibition of histone acetylation by ANP32B. Some Glu residues are glycylated by TTLL8; a modification that generates a side chains of glycine on the gamma-carboxyl groups of specific glutamate residues. Post-translationally, directly cleaved by caspase-3/CASP3.

It is found in the nucleus. Functionally, multifunctional protein that is involved in the regulation of many processes including cell proliferation, apoptosis, cell cycle progression or transcription. Regulates the proliferation of neuronal stem cells, differentiation of leukemic cells and progression from G1 to S phase of the cell cycle. As negative regulator of caspase-3-dependent apoptosis, may act as an antagonist of ANP32A in regulating tissue homeostasis. Exhibits histone chaperone properties, able to recruit histones to certain promoters, thus regulating the transcription of specific genes. Also plays an essential role in the nucleocytoplasmic transport of specific mRNAs via the uncommon nuclear mRNA export receptor XPO1/CRM1. Participates in the regulation of adequate adaptive immune responses by acting on mRNA expression and cell proliferation. This is Acidic leucine-rich nuclear phosphoprotein 32 family member B (ANP32B) from Bos taurus (Bovine).